The chain runs to 367 residues: Alanine racemase (367 aa).

Lysine 40 serves as the catalytic Proton acceptor; specific for D-alanine. The residue at position 40 (lysine 40) is an N6-(pyridoxal phosphate)lysine. Arginine 136 provides a ligand contact to substrate. Tyrosine 263 serves as the catalytic Proton acceptor; specific for L-alanine. Residue methionine 310 coordinates substrate.

This sequence belongs to the alanine racemase family. Pyridoxal 5'-phosphate serves as cofactor.

The catalysed reaction is L-alanine = D-alanine. The protein operates within amino-acid biosynthesis; D-alanine biosynthesis; D-alanine from L-alanine: step 1/1. Its function is as follows. Catalyzes the interconversion of L-alanine and D-alanine. May also act on other amino acids. In Streptococcus pneumoniae serotype 19F (strain G54), this protein is Alanine racemase (alr).